A 523-amino-acid polypeptide reads, in one-letter code: 2-isopropylmalate synthase (523 aa).

Residues valine 5 to tryptophan 267 enclose the Pyruvate carboxyltransferase domain. Positions 14, 202, 204, and 238 each coordinate Mn(2+). A regulatory domain region spans residues arginine 392–valine 523.

Belongs to the alpha-IPM synthase/homocitrate synthase family. LeuA type 1 subfamily. As to quaternary structure, homodimer. Requires Mn(2+) as cofactor.

The protein localises to the cytoplasm. The enzyme catalyses 3-methyl-2-oxobutanoate + acetyl-CoA + H2O = (2S)-2-isopropylmalate + CoA + H(+). The protein operates within amino-acid biosynthesis; L-leucine biosynthesis; L-leucine from 3-methyl-2-oxobutanoate: step 1/4. Functionally, catalyzes the condensation of the acetyl group of acetyl-CoA with 3-methyl-2-oxobutanoate (2-ketoisovalerate) to form 3-carboxy-3-hydroxy-4-methylpentanoate (2-isopropylmalate). The chain is 2-isopropylmalate synthase from Escherichia coli O45:K1 (strain S88 / ExPEC).